The chain runs to 242 residues: Probable transcriptional regulatory protein EUBREC_1961 (242 aa).

Belongs to the TACO1 family.

Its subcellular location is the cytoplasm. This Agathobacter rectalis (strain ATCC 33656 / DSM 3377 / JCM 17463 / KCTC 5835 / VPI 0990) (Eubacterium rectale) protein is Probable transcriptional regulatory protein EUBREC_1961.